The chain runs to 141 residues: Hemoglobin subunit alpha-D (141 aa).

The Globin domain occupies 1-141 (MLTADDKKLL…VAAVLAEKYR (141 aa)). Heme b-binding residues include His58 and His87.

This sequence belongs to the globin family. In terms of assembly, heterotetramer of two alpha-D chains and two beta chains. Red blood cells.

Its function is as follows. Involved in oxygen transport from the lung to the various peripheral tissues. The sequence is that of Hemoglobin subunit alpha-D (HBAD) from Chloephaga melanoptera (Andean goose).